The following is a 465-amino-acid chain: Ribulose bisphosphate carboxylase large chain (465 aa).

The residue at position 4 (Lys4) is an N6,N6,N6-trimethyllysine. Substrate contacts are provided by Asn113 and Thr163. Catalysis depends on Lys165, which acts as the Proton acceptor. Residue Lys167 coordinates substrate. Residues Lys191, Asp193, and Glu194 each contribute to the Mg(2+) site. Lys191 carries the N6-carboxylysine modification. His284 (proton acceptor) is an active-site residue. Residues Arg285, His317, and Ser369 each contribute to the substrate site.

The protein belongs to the RuBisCO large chain family. Type I subfamily. Heterohexadecamer of 8 large chains and 8 small chains; disulfide-linked. The disulfide link is formed within the large subunit homodimers. Mg(2+) serves as cofactor. Post-translationally, the disulfide bond which can form in the large chain dimeric partners within the hexadecamer appears to be associated with oxidative stress and protein turnover.

Its subcellular location is the plastid. The protein localises to the chloroplast. The catalysed reaction is 2 (2R)-3-phosphoglycerate + 2 H(+) = D-ribulose 1,5-bisphosphate + CO2 + H2O. It catalyses the reaction D-ribulose 1,5-bisphosphate + O2 = 2-phosphoglycolate + (2R)-3-phosphoglycerate + 2 H(+). Functionally, ruBisCO catalyzes two reactions: the carboxylation of D-ribulose 1,5-bisphosphate, the primary event in carbon dioxide fixation, as well as the oxidative fragmentation of the pentose substrate in the photorespiration process. Both reactions occur simultaneously and in competition at the same active site. The chain is Ribulose bisphosphate carboxylase large chain from Fragaria ananassa (Strawberry).